Consider the following 328-residue polypeptide: Malate dehydrogenase (328 aa).

Position 11–17 (11–17) interacts with NAD(+); that stretch reads GAAGQIG. Arg-94 and Arg-100 together coordinate substrate. NAD(+) contacts are provided by residues Asn-107, Gln-114, and 131-133; that span reads VGN. Residues Asn-133 and Arg-164 each coordinate substrate. Catalysis depends on His-189, which acts as the Proton acceptor.

Belongs to the LDH/MDH superfamily. MDH type 2 family.

It carries out the reaction (S)-malate + NAD(+) = oxaloacetate + NADH + H(+). Functionally, catalyzes the reversible oxidation of malate to oxaloacetate. In Xanthomonas euvesicatoria pv. vesicatoria (strain 85-10) (Xanthomonas campestris pv. vesicatoria), this protein is Malate dehydrogenase.